A 234-amino-acid chain; its full sequence is Phosphoribosylformylglycinamidine synthase subunit PurQ (234 aa).

A Glutamine amidotransferase type-1 domain is found at 5–234; sequence TVGIVVFPGS…ESLFAHLAGA (230 aa). Cysteine 89 functions as the Nucleophile in the catalytic mechanism. Catalysis depends on residues histidine 206 and glutamate 208.

As to quaternary structure, part of the FGAM synthase complex composed of 1 PurL, 1 PurQ and 2 PurS subunits.

It is found in the cytoplasm. The catalysed reaction is N(2)-formyl-N(1)-(5-phospho-beta-D-ribosyl)glycinamide + L-glutamine + ATP + H2O = 2-formamido-N(1)-(5-O-phospho-beta-D-ribosyl)acetamidine + L-glutamate + ADP + phosphate + H(+). It carries out the reaction L-glutamine + H2O = L-glutamate + NH4(+). It functions in the pathway purine metabolism; IMP biosynthesis via de novo pathway; 5-amino-1-(5-phospho-D-ribosyl)imidazole from N(2)-formyl-N(1)-(5-phospho-D-ribosyl)glycinamide: step 1/2. Functionally, part of the phosphoribosylformylglycinamidine synthase complex involved in the purines biosynthetic pathway. Catalyzes the ATP-dependent conversion of formylglycinamide ribonucleotide (FGAR) and glutamine to yield formylglycinamidine ribonucleotide (FGAM) and glutamate. The FGAM synthase complex is composed of three subunits. PurQ produces an ammonia molecule by converting glutamine to glutamate. PurL transfers the ammonia molecule to FGAR to form FGAM in an ATP-dependent manner. PurS interacts with PurQ and PurL and is thought to assist in the transfer of the ammonia molecule from PurQ to PurL. The polypeptide is Phosphoribosylformylglycinamidine synthase subunit PurQ (Chlorobaculum tepidum (strain ATCC 49652 / DSM 12025 / NBRC 103806 / TLS) (Chlorobium tepidum)).